The following is a 469-amino-acid chain: Cell division protein FtsP (469 aa).

The tat-type signal signal peptide spans 1–27 (MKLSRRQFLQRSTLAGVATVTPTSLWA).

The protein belongs to the FtsP family. In terms of processing, predicted to be exported by the Tat system. The position of the signal peptide cleavage has not been experimentally proven.

It is found in the periplasm. Functionally, cell division protein that is required for growth during stress conditions. May be involved in protecting or stabilizing the divisomal assembly under conditions of stress. The protein is Cell division protein FtsP of Glaesserella parasuis serovar 5 (strain SH0165) (Haemophilus parasuis).